The following is a 165-amino-acid chain: Large ribosomal subunit protein uL10 (165 aa).

The protein belongs to the universal ribosomal protein uL10 family. Part of the ribosomal stalk of the 50S ribosomal subunit. The N-terminus interacts with L11 and the large rRNA to form the base of the stalk. The C-terminus forms an elongated spine to which L12 dimers bind in a sequential fashion forming a multimeric L10(L12)X complex.

Forms part of the ribosomal stalk, playing a central role in the interaction of the ribosome with GTP-bound translation factors. The sequence is that of Large ribosomal subunit protein uL10 from Shewanella halifaxensis (strain HAW-EB4).